Reading from the N-terminus, the 414-residue chain is NADH-quinone oxidoreductase subunit D (414 aa).

It belongs to the complex I 49 kDa subunit family. As to quaternary structure, NDH-1 is composed of 14 different subunits. Subunits NuoB, C, D, E, F, and G constitute the peripheral sector of the complex.

Its subcellular location is the cell inner membrane. The enzyme catalyses a quinone + NADH + 5 H(+)(in) = a quinol + NAD(+) + 4 H(+)(out). In terms of biological role, NDH-1 shuttles electrons from NADH, via FMN and iron-sulfur (Fe-S) centers, to quinones in the respiratory chain. The immediate electron acceptor for the enzyme in this species is believed to be ubiquinone. Couples the redox reaction to proton translocation (for every two electrons transferred, four hydrogen ions are translocated across the cytoplasmic membrane), and thus conserves the redox energy in a proton gradient. The polypeptide is NADH-quinone oxidoreductase subunit D (Akkermansia muciniphila (strain ATCC BAA-835 / DSM 22959 / JCM 33894 / BCRC 81048 / CCUG 64013 / CIP 107961 / Muc)).